A 392-amino-acid chain; its full sequence is MSTHPVLDWSRSAEHLRRSHGVTTDPRPDEDGHYPCVLTRGSGTRVYDLDGNAYLDLTGSFGSVLIGHAEPAVVRAVTDVLSEGNLFYTGASPRRLALAERLLDWFPWSEQAIFYRTGSCAVSAAARLAQHATGRNRVLSSGYHGWHDWHLEAVPEAKPKTFESYATEFHNDLALYRSWLDRHGEEIAAVVVTPEPHRFDHAYYQELREVAKEHGCLFVVDEVKTGFRAGAGGFSALAGIEPDAVTVSKGMANGHSISAVVGQRQLTQELSEAHVWSTYQNEQVGFAAALASLDFLERHDVAAVTRRTGEAVRQGVLQLFAEHGLPVGAPGWGPMFELDFDAADEGLAERLEAALLRHGIFCDTGDDFNMMFHTAEHTDELLERFAAALGDL.

Position 249 is an N6-(pyridoxal phosphate)lysine (Lys-249).

Belongs to the class-III pyridoxal-phosphate-dependent aminotransferase family. Requires pyridoxal 5'-phosphate as cofactor.

It carries out the reaction neamine + 2-oxoglutarate = 6'-oxoparomamine + L-glutamate. The catalysed reaction is 2'-deamino-2'-hydroxyneamine + 2-oxoglutarate = 2'-deamino-2'-hydroxy-6'-dehydroparomamine + L-glutamate. It functions in the pathway antibiotic biosynthesis; kanamycin biosynthesis. In terms of biological role, aminotransferase that has 6'-oxoglucosaminyl:L-glutamate aminotransferase activity by catalyzing pyridoxal-5'-phosphate-mediated transamination leading to the conversion of paromamine to neamine in the biosynthetic pathway of kanamycin B. This Streptomyces kanamyceticus protein is 2'-deamino-2'-hydroxyneamine transaminase (kacL).